The following is a 297-amino-acid chain: Protoheme IX farnesyltransferase 1 (297 aa).

9 helical membrane passes run 23–43 (VVVL…RAGV), 45–65 (WSVL…AAVV), 93–113 (LPAL…LLVF), 117–137 (LTAW…TGFL), 145–165 (IVIG…AVSG), 171–191 (PLLL…ALAI), 216–236 (LHIL…YAIH), 241–261 (LYLA…WVLY), and 277–297 (IGYL…LLSL).

It belongs to the UbiA prenyltransferase family. Protoheme IX farnesyltransferase subfamily.

It localises to the cell inner membrane. It catalyses the reaction heme b + (2E,6E)-farnesyl diphosphate + H2O = Fe(II)-heme o + diphosphate. The protein operates within porphyrin-containing compound metabolism; heme O biosynthesis; heme O from protoheme: step 1/1. In terms of biological role, converts heme B (protoheme IX) to heme O by substitution of the vinyl group on carbon 2 of heme B porphyrin ring with a hydroxyethyl farnesyl side group. This is Protoheme IX farnesyltransferase 1 from Pseudomonas putida (strain ATCC 700007 / DSM 6899 / JCM 31910 / BCRC 17059 / LMG 24140 / F1).